The chain runs to 364 residues: DNA polymerase IV (364 aa).

The UmuC domain occupies 14 to 198 (IIHIDMDAFF…LPIEKFHGVG (185 aa)). Mg(2+)-binding residues include aspartate 18 and aspartate 116. The active site involves glutamate 117.

This sequence belongs to the DNA polymerase type-Y family. In terms of assembly, monomer. Mg(2+) serves as cofactor.

It is found in the cytoplasm. The enzyme catalyses DNA(n) + a 2'-deoxyribonucleoside 5'-triphosphate = DNA(n+1) + diphosphate. Its function is as follows. Poorly processive, error-prone DNA polymerase involved in untargeted mutagenesis. Copies undamaged DNA at stalled replication forks, which arise in vivo from mismatched or misaligned primer ends. These misaligned primers can be extended by PolIV. Exhibits no 3'-5' exonuclease (proofreading) activity. May be involved in translesional synthesis, in conjunction with the beta clamp from PolIII. The polypeptide is DNA polymerase IV (Streptococcus pyogenes serotype M28 (strain MGAS6180)).